The following is a 318-amino-acid chain: Olfactory receptor 13C2 (318 aa).

Over 1-25 (MEWENHTILVEFFLKGLSGHPRLEL) the chain is Extracellular. The N-linked (GlcNAc...) asparagine glycan is linked to Asn-5. Residues 26 to 46 (LFFVLIFIMYVVILLGNGTLI) form a helical membrane-spanning segment. Residues 47–54 (LISILDPH) lie on the Cytoplasmic side of the membrane. The chain crosses the membrane as a helical span at residues 55-75 (LHTPMYFFLGNLSFLDICYTT). Over 76–99 (TSIPSTLVSFLSERKTISLSGCAV) the chain is Extracellular. A disulfide bridge connects residues Cys-97 and Cys-189. The chain crosses the membrane as a helical span at residues 100-120 (QMFLGLAMGTTECVLLGMMAF). At 121–139 (DRYVAICNPLRYPIIMSKD) the chain is on the cytoplasmic side. The chain crosses the membrane as a helical span at residues 140–160 (AYVPMAAGSWIIGAVNSAVQS). Topologically, residues 161–197 (VFVVQLPFCRNNIINHFTCEILAVMKLACADISDNEF) are extracellular. The chain crosses the membrane as a helical span at residues 198–217 (IMLVATTLFILTPLLLIIVS). The Cytoplasmic portion of the chain corresponds to 218–237 (YTLIIVSIFKISSSEGRSKA). The chain crosses the membrane as a helical span at residues 238-258 (SSTCSAHLTVVIIFYGTILFM). Topologically, residues 259-277 (YMKPKSKETLNSDDLDATD) are extracellular. The helical transmembrane segment at 278 to 298 (KIISMFYGVMTPMMNPLIYSL) threads the bilayer. Topologically, residues 299–318 (RNKDVKEAVKHLLNRRFFSK) are cytoplasmic.

It belongs to the G-protein coupled receptor 1 family.

It is found in the cell membrane. Odorant receptor. The protein is Olfactory receptor 13C2 (OR13C2) of Homo sapiens (Human).